The primary structure comprises 165 residues: Large ribosomal subunit protein uL10 (165 aa).

This sequence belongs to the universal ribosomal protein uL10 family. Part of the ribosomal stalk of the 50S ribosomal subunit. The N-terminus interacts with L11 and the large rRNA to form the base of the stalk. The C-terminus forms an elongated spine to which L12 dimers bind in a sequential fashion forming a multimeric L10(L12)X complex.

In terms of biological role, forms part of the ribosomal stalk, playing a central role in the interaction of the ribosome with GTP-bound translation factors. This Halalkalibacterium halodurans (strain ATCC BAA-125 / DSM 18197 / FERM 7344 / JCM 9153 / C-125) (Bacillus halodurans) protein is Large ribosomal subunit protein uL10 (rplJ).